Reading from the N-terminus, the 243-residue chain is Small ribosomal subunit protein uS2c (243 aa).

Belongs to the universal ribosomal protein uS2 family.

The protein localises to the plastid. Its subcellular location is the chloroplast. This chain is Small ribosomal subunit protein uS2c (rps2), found in Cyanidium caldarium (Red alga).